Consider the following 480-residue polypeptide: Cysteine--tRNA ligase (480 aa).

Position 29 (Cys-29) interacts with Zn(2+). The short motif at 31–41 (PTVYSDPHLGH) is the 'HIGH' region element. Zn(2+)-binding residues include Cys-220, His-245, and Glu-249. Residues 276–280 (KMAKS) carry the 'KMSKS' region motif. Lys-279 contacts ATP.

The protein belongs to the class-I aminoacyl-tRNA synthetase family. In terms of assembly, monomer. Zn(2+) serves as cofactor.

It is found in the cytoplasm. It carries out the reaction tRNA(Cys) + L-cysteine + ATP = L-cysteinyl-tRNA(Cys) + AMP + diphosphate. This is Cysteine--tRNA ligase from Thermus thermophilus (strain ATCC BAA-163 / DSM 7039 / HB27).